Here is a 144-residue protein sequence, read N- to C-terminus: Histone H2B.2, sperm (144 aa).

The segment at 1–51 is disordered; that stretch reads MPRSPSKTSPRKGSPRRGSPSRKASPKRGGKGAKRAGKGGRRRNVVRRRRR. 5 short sequence motifs (SPKK motif) span residues 4 to 7, 9 to 12, 14 to 17, 19 to 22, and 25 to 28; these read SPSK, SPRK, SPRR, SPSR, and SPKR. Residues S14, S19, and S25 each carry the phosphoserine modification. Residues 24 to 51 are compositionally biased toward basic residues; sequence ASPKRGGKGAKRAGKGGRRRNVVRRRRR. S131 carries an O-linked (GlcNAc) serine glycan. Residue K139 forms a Glycyl lysine isopeptide (Lys-Gly) (interchain with G-Cter in ubiquitin) linkage.

This sequence belongs to the histone H2B family. As to quaternary structure, the nucleosome is a histone octamer containing two molecules each of H2A, H2B, H3 and H4 assembled in one H3-H4 heterotetramer and two H2A-H2B heterodimers. The octamer wraps approximately 147 bp of DNA. Post-translationally, monoubiquitination of Lys-139 gives a specific tag for epigenetic transcriptional activation and is also prerequisite for histone H3 'Lys-4' and 'Lys-79' methylation. In terms of processing, phosphorylated on SPKK motifs 3, 4 and 5; which may regulate DNA binding. Dephosphorylated during maturation of spermatids to mature sperm and rephosphorylated at fertilization. GlcNAcylation at Ser-131 promotes monoubiquitination of Lys-139. It fluctuates in response to extracellular glucose, and associates with transcribed genes.

Its subcellular location is the nucleus. The protein localises to the chromosome. Functionally, core component of nucleosome. Nucleosomes wrap and compact DNA into chromatin, limiting DNA accessibility to the cellular machineries which require DNA as a template. Histones thereby play a central role in transcription regulation, DNA repair, DNA replication and chromosomal stability. DNA accessibility is regulated via a complex set of post-translational modifications of histones, also called histone code, and nucleosome remodeling. This chain is Histone H2B.2, sperm, found in Strongylocentrotus purpuratus (Purple sea urchin).